The primary structure comprises 207 residues: Large ribosomal subunit protein uL4 (207 aa).

The segment at 49 to 77 is disordered; that stretch reads HAVKNRSAVRGGGKKPWRQKGTGRARQGS. Over residues 60–71 the composition is skewed to basic residues; the sequence is GGKKPWRQKGTG.

Belongs to the universal ribosomal protein uL4 family. As to quaternary structure, part of the 50S ribosomal subunit.

Functionally, one of the primary rRNA binding proteins, this protein initially binds near the 5'-end of the 23S rRNA. It is important during the early stages of 50S assembly. It makes multiple contacts with different domains of the 23S rRNA in the assembled 50S subunit and ribosome. Its function is as follows. Forms part of the polypeptide exit tunnel. This chain is Large ribosomal subunit protein uL4, found in Levilactobacillus brevis (strain ATCC 367 / BCRC 12310 / CIP 105137 / JCM 1170 / LMG 11437 / NCIMB 947 / NCTC 947) (Lactobacillus brevis).